A 527-amino-acid polypeptide reads, in one-letter code: MGKLLLWVGLVLVLKHHNGAAHKLVCYFANWAFSRPGPASILPRDLDPFLCTHLVFAFASMNDSQIVAKDARDESIFYPEFNQLKERNEKLKTLLSIGGWNFGTSRFTTMLSTFTNREKFIRSAIGLLRTHGFDGLDLFFLYPGLRGSPRRDRWNFLFLLEELLLAFRREAQLTMRPRLLLSAAVSADPHVIQKAYDVRLLGRLLDFINVLSYDLHGSWEKVTGHNSPLFSLSDDPKSSAYTMNYWRKLGAPPEKLLMGFPTYGRTFRLLKASKNELGAEAVGPASPGKYTKQAGFLAYYEVCSFVQRAKKRWIDHQYVPYAYRGKEWVGYDDDISFSYKAFFIKKEHFGGAMVWTLDLDDVRGTFCGTGPFPLVYMLNDLLLKAEVSSTLSPGFGLSTTVNSSRTCPESLAVTKDLTTDLGILPLGGEAVATETHGRSDNMTVTPGGGLVAPTRPTLSFGKLTVAPEGKTESPGEKAMTPVGHPSVTPGDMSVPPVPIQTGDRITPPRRQAVAPEKMTLPSGKRSD.

The signal sequence occupies residues 1 to 21 (MGKLLLWVGLVLVLKHHNGAA). The GH18 domain occupies 22-385 (HKLVCYFANW…YMLNDLLLKA (364 aa)). The cysteines at positions 26 and 51 are disulfide-linked. Asn-62 is a glycosylation site (N-linked (GlcNAc...) asparagine). Residues 71–72 (AR), 98–101 (GGWN), Tyr-142, 211–214 (LSYD), and Trp-355 each bind chitin. N-linked (GlcNAc...) asparagine glycosylation is found at Asn-402 and Asn-441. Residues 433-527 (TETHGRSDNM…MTLPSGKRSD (95 aa)) are disordered.

The protein belongs to the glycosyl hydrolase 18 family. As to expression, oviduct.

The protein resides in the cytoplasmic vesicle. It localises to the secretory vesicle. Its function is as follows. Binds to oocyte zona pellucida in vivo. May play a role in the fertilization process and/or early embryonic development. In Sus scrofa (Pig), this protein is Oviduct-specific glycoprotein (OVGP1).